The primary structure comprises 269 residues: Shikimate dehydrogenase (NADP(+)) (269 aa).

Shikimate contacts are provided by residues Ser-17–Ser-19 and Thr-64. Lys-68 serves as the catalytic Proton acceptor. Glu-80 lines the NADP(+) pocket. Residues Asn-89 and Asp-105 each coordinate shikimate. Residues Gly-130–Ala-134, Asn-154–Lys-159, and Met-213 each bind NADP(+). Tyr-215 lines the shikimate pocket. An NADP(+)-binding site is contributed by Gly-237.

It belongs to the shikimate dehydrogenase family. Homodimer.

The enzyme catalyses shikimate + NADP(+) = 3-dehydroshikimate + NADPH + H(+). Its pathway is metabolic intermediate biosynthesis; chorismate biosynthesis; chorismate from D-erythrose 4-phosphate and phosphoenolpyruvate: step 4/7. Involved in the biosynthesis of the chorismate, which leads to the biosynthesis of aromatic amino acids. Catalyzes the reversible NADPH linked reduction of 3-dehydroshikimate (DHSA) to yield shikimate (SA). The sequence is that of Shikimate dehydrogenase (NADP(+)) from Neisseria mucosa.